We begin with the raw amino-acid sequence, 444 residues long: L-cysteine:1D-myo-inositol 2-amino-2-deoxy-alpha-D-glucopyranoside ligase (444 aa).

Cysteine 66 contributes to the Zn(2+) binding site. L-cysteinyl-5'-AMP-binding positions include 66 to 69 (CGIT), threonine 81, and 104 to 106 (NVT). Positions 68–78 (ITPYDATHLGH) match the 'HIGH' region motif. The 'ERGGDP' region signature appears at 206–211 (EHGGDP). Tryptophan 246 serves as a coordination point for L-cysteinyl-5'-AMP. Cysteine 250 provides a ligand contact to Zn(2+). 268–270 (GSD) is a binding site for L-cysteinyl-5'-AMP. Residue histidine 275 participates in Zn(2+) binding. Valine 302 provides a ligand contact to L-cysteinyl-5'-AMP. Residues 308–312 (KMSKS) carry the 'KMSKS' region motif.

This sequence belongs to the class-I aminoacyl-tRNA synthetase family. MshC subfamily. In terms of assembly, monomer. Zn(2+) serves as cofactor.

The catalysed reaction is 1D-myo-inositol 2-amino-2-deoxy-alpha-D-glucopyranoside + L-cysteine + ATP = 1D-myo-inositol 2-(L-cysteinylamino)-2-deoxy-alpha-D-glucopyranoside + AMP + diphosphate + H(+). Catalyzes the ATP-dependent condensation of GlcN-Ins and L-cysteine to form L-Cys-GlcN-Ins. This Parafrankia sp. (strain EAN1pec) protein is L-cysteine:1D-myo-inositol 2-amino-2-deoxy-alpha-D-glucopyranoside ligase.